Consider the following 387-residue polypeptide: Phosphoglycerate kinase (387 aa).

Substrate-binding positions include 21 to 23, Arg36, 59 to 62, Arg113, and Arg146; these read DLN and HLGR. Residues Lys197, Glu314, and 340 to 343 contribute to the ATP site; that span reads GGDT.

This sequence belongs to the phosphoglycerate kinase family. In terms of assembly, monomer.

The protein resides in the cytoplasm. It carries out the reaction (2R)-3-phosphoglycerate + ATP = (2R)-3-phospho-glyceroyl phosphate + ADP. Its pathway is carbohydrate degradation; glycolysis; pyruvate from D-glyceraldehyde 3-phosphate: step 2/5. This is Phosphoglycerate kinase from Marinomonas sp. (strain MWYL1).